A 207-amino-acid chain; its full sequence is GILT-like protein 2 (207 aa).

The signal sequence occupies residues 1 to 19; it reads MRAAVFVCLLLGWVGVATP. C40 and C43 are joined by a disulfide. N182 carries N-linked (GlcNAc...) asparagine glycosylation.

The protein belongs to the GILT family.

It is found in the secreted. Probable lysosomal thiol reductase that can reduce protein disulfide bonds. Involved in the immune response to bacterial infection. This chain is GILT-like protein 2, found in Drosophila melanogaster (Fruit fly).